The following is a 115-amino-acid chain: Glutaredoxin 4 (115 aa).

One can recognise a Glutaredoxin domain in the interval 5 to 107 (IEKIQRQIAE…QLIKETAAKY (103 aa)). Glutathione is bound at residue lysine 22. Cysteine 30 contributes to the [2Fe-2S] cluster binding site. Residues arginine 59, phenylalanine 71, and 84-85 (CD) each bind glutathione.

This sequence belongs to the glutaredoxin family. Monothiol subfamily. In terms of assembly, homodimer.

It is found in the cytoplasm. Its function is as follows. Monothiol glutaredoxin involved in the biogenesis of iron-sulfur clusters. The protein is Glutaredoxin 4 (grxD) of Shigella flexneri.